Consider the following 408-residue polypeptide: Putative ankyrin repeat protein L483 (408 aa).

11 ANK repeats span residues 78 to 107 (SLNK…DIKA), 108 to 137 (GDDC…NIRA), 139 to 167 (NDYA…DIRA), 168 to 197 (NNDY…NIRT), 198 to 227 (ENDY…DIRA), 229 to 257 (NDYA…NIRV), 259 to 287 (NDYA…NIRA), 288 to 317 (RCDF…DIRS), 318 to 347 (QNDY…DIRT), 349 to 377 (DDYA…NIRA), and 378 to 407 (KDDY…VLTK).

The sequence is that of Putative ankyrin repeat protein L483 from Acanthamoeba polyphaga (Amoeba).